A 241-amino-acid chain; its full sequence is Ribonuclease PH (241 aa).

Residues arginine 87 and 125 to 127 (GTR) contribute to the phosphate site.

Belongs to the RNase PH family. In terms of assembly, homohexameric ring arranged as a trimer of dimers.

It carries out the reaction tRNA(n+1) + phosphate = tRNA(n) + a ribonucleoside 5'-diphosphate. Phosphorolytic 3'-5' exoribonuclease that plays an important role in tRNA 3'-end maturation. Removes nucleotide residues following the 3'-CCA terminus of tRNAs; can also add nucleotides to the ends of RNA molecules by using nucleoside diphosphates as substrates, but this may not be physiologically important. Probably plays a role in initiation of 16S rRNA degradation (leading to ribosome degradation) during starvation. This Nitrosomonas europaea (strain ATCC 19718 / CIP 103999 / KCTC 2705 / NBRC 14298) protein is Ribonuclease PH.